A 168-amino-acid chain; its full sequence is Mitochondrial inner membrane protein Mpv17 (168 aa).

A run of 4 helical transmembrane segments spans residues Ile-12–Phe-29, Arg-41–Tyr-61, Met-82–Val-101, and Leu-144–Leu-166.

It belongs to the peroxisomal membrane protein PXMP2/4 family. Part of a larger complex that may be a homohexamer.

The protein resides in the mitochondrion inner membrane. In terms of biological role, non-selective channel that modulates the membrane potential under normal conditions and oxidative stress, and is involved in mitochondrial homeostasis. Can translocate uridine, but not orotate, across a lipid membrane. Involved in maintenance of mitochondrial ultrastructure. May be involved in mitochondrial DNA (mtDNA) maintenance but does not appear to be directly involved in mitochondrial deoxynucleoside triphosphate (dNTP) pool homeostasis. May be involved in the regulation of reactive oxygen species metabolism and the control of oxidative phosphorylation. The sequence is that of Mitochondrial inner membrane protein Mpv17 from Drosophila melanogaster (Fruit fly).